Reading from the N-terminus, the 304-residue chain is Acetyl-coenzyme A carboxylase carboxyl transferase subunit beta (304 aa).

In terms of domain architecture, CoA carboxyltransferase N-terminal spans 23–292 (VWTKCDSCGQ…PNPEAPREGV (270 aa)). Zn(2+) is bound by residues Cys-27, Cys-30, Cys-46, and Cys-49. The segment at 27 to 49 (CDSCGQVLYRAELERNLEVCPKC) adopts a C4-type zinc-finger fold. The interval 284–304 (NPEAPREGVVVPPVPDQEPEA) is disordered. Over residues 295-304 (PPVPDQEPEA) the composition is skewed to pro residues.

The protein belongs to the AccD/PCCB family. In terms of assembly, acetyl-CoA carboxylase is a heterohexamer composed of biotin carboxyl carrier protein (AccB), biotin carboxylase (AccC) and two subunits each of ACCase subunit alpha (AccA) and ACCase subunit beta (AccD). It depends on Zn(2+) as a cofactor.

The protein resides in the cytoplasm. It catalyses the reaction N(6)-carboxybiotinyl-L-lysyl-[protein] + acetyl-CoA = N(6)-biotinyl-L-lysyl-[protein] + malonyl-CoA. It functions in the pathway lipid metabolism; malonyl-CoA biosynthesis; malonyl-CoA from acetyl-CoA: step 1/1. Its function is as follows. Component of the acetyl coenzyme A carboxylase (ACC) complex. Biotin carboxylase (BC) catalyzes the carboxylation of biotin on its carrier protein (BCCP) and then the CO(2) group is transferred by the transcarboxylase to acetyl-CoA to form malonyl-CoA. In Shigella boydii serotype 18 (strain CDC 3083-94 / BS512), this protein is Acetyl-coenzyme A carboxylase carboxyl transferase subunit beta.